Reading from the N-terminus, the 156-residue chain is Endoribonuclease YbeY (156 aa).

The Zn(2+) site is built by histidine 117, histidine 121, and histidine 127.

The protein belongs to the endoribonuclease YbeY family. It depends on Zn(2+) as a cofactor.

The protein localises to the cytoplasm. In terms of biological role, single strand-specific metallo-endoribonuclease involved in late-stage 70S ribosome quality control and in maturation of the 3' terminus of the 16S rRNA. The protein is Endoribonuclease YbeY of Herminiimonas arsenicoxydans.